A 130-amino-acid chain; its full sequence is Small ribosomal subunit protein uS9 (130 aa).

Belongs to the universal ribosomal protein uS9 family.

This chain is Small ribosomal subunit protein uS9, found in Anoxybacillus flavithermus (strain DSM 21510 / WK1).